The primary structure comprises 792 residues: Coiled-coil domain-containing protein R3HCC1L (792 aa).

Residues 7-27 (RCRVRARRPDMALYVPKARRG) are EJC-binding motif; may mediate interaction with the EJC. Disordered stretches follow at residues 32-61 (KTGD…QKEV) and 527-567 (EFKT…TSHT). Ser688 carries the phosphoserine modification. Thr712 carries the post-translational modification Phosphothreonine. Residues 751-783 (RSKQSKTEREAELKKLQEARERKRLEAKQREDI) are a coiled coil. The interval 772–792 (RKRLEAKQREDIWEGRDQSTV) is disordered.

In terms of assembly, may interact with the exon junction complex (EJC) composed at least of CASC3, EIF4A3, MAGOH and RBM8A. As to expression, expressed in placenta.

The polypeptide is Coiled-coil domain-containing protein R3HCC1L (R3HCC1L) (Homo sapiens (Human)).